We begin with the raw amino-acid sequence, 1426 residues long: Protein RhsD (1426 aa).

Residues Ala256–Thr285 form a disordered region. Residues Ser262–Ala277 show a composition bias toward low complexity. The interval Tyr320–Tyr1197 is 28 X approximate tandem repeats. Tandem repeats lie at residues Asn334–Ala356, Gly357–Ala378, Gly379–Asp421, Gly422–Ala442, Gly443–Asp464, Gly465–Asp485, Gly486–Ser506, Gly507–Thr529, Gly530–Ser550, Gly551–Glu571, Gly572–Gln592, Gly593–Asp613, Gly614–Gly633, Gly634–Asn654, Gly655–Asp675, Gly676–Glu695, Gly696–Asn715, Gly716–Glu738, Gly739–Glu762, Gly812–Phe832, Gly833–Ser861, Leu862–Pro882, Arg883–Asp905, Leu906–Ala941, Glu942–Thr970, Asp971–Gly995, and Glu996–Ser1030. Positions Glu1073–Leu1085 are enriched in basic and acidic residues. Residues Glu1073–Gly1097 are disordered. Residues Gly1173–Tyr1197 form repeat 28.

The protein belongs to the RHS family.

In terms of biological role, rhs elements have a nonessential function. They may play an important role in the natural ecology of the cell. This chain is Protein RhsD (rhsD), found in Escherichia coli (strain K12).